The primary structure comprises 75 residues: UPF0352 protein YejL (75 aa).

It belongs to the UPF0352 family.

This Shigella sonnei (strain Ss046) protein is UPF0352 protein YejL.